The chain runs to 396 residues: Probable glucan endo-1,6-beta-glucosidase B (396 aa).

Residues 1 to 17 (MIRRLAAFSALSGLATA) form the signal peptide. An N-linked (GlcNAc...) asparagine glycan is attached at Asn30. Glu219 functions as the Proton donor in the catalytic mechanism. Asn272 carries N-linked (GlcNAc...) asparagine glycosylation. Glu320 acts as the Nucleophile in catalysis.

It belongs to the glycosyl hydrolase 5 (cellulase A) family.

The protein localises to the secreted. It catalyses the reaction Random hydrolysis of (1-&gt;6)-linkages in (1-&gt;6)-beta-D-glucans.. Its function is as follows. Beta-glucanases participate in the metabolism of beta-glucan, the main structural component of the cell wall. Acts on lutean, pustulan and 1,6-oligo-beta-D-glucosides. The protein is Probable glucan endo-1,6-beta-glucosidase B (exgB) of Aspergillus fumigatus (strain CBS 144.89 / FGSC A1163 / CEA10) (Neosartorya fumigata).